A 1057-amino-acid polypeptide reads, in one-letter code: Carbamoyl phosphate synthase large chain (1057 aa).

The carboxyphosphate synthetic domain stretch occupies residues 1–401 (MPKREDINKI…ATQKAIRSLD (401 aa)). 12 residues coordinate ATP: arginine 129, arginine 169, glycine 175, glycine 176, glutamine 208, isoleucine 210, glutamate 215, glycine 241, isoleucine 242, histidine 243, glutamine 284, and glutamate 298. The region spanning 133–327 (RALMNDLNEP…IAKVAAKIAV (195 aa)) is the ATP-grasp 1 domain. Residues glutamine 284, glutamate 298, and asparagine 300 each contribute to the Mg(2+) site. 3 residues coordinate Mn(2+): glutamine 284, glutamate 298, and asparagine 300. The interval 402–546 (IDINYIGDEE…YSTYELENES (145 aa)) is oligomerization domain. The tract at residues 547–929 (IVSNRKSIVV…ALYKAFEGAK (383 aa)) is carbamoyl phosphate synthetic domain. Positions 671–861 (NKLIQANGIR…MARLATRAIL (191 aa)) constitute an ATP-grasp 2 domain. ATP contacts are provided by arginine 707, glutamine 746, leucine 748, glutamate 752, glycine 777, valine 778, histidine 779, serine 780, glutamine 820, and glutamate 832. Residues glutamine 820, glutamate 832, and asparagine 834 each coordinate Mg(2+). Residues glutamine 820, glutamate 832, and asparagine 834 each contribute to the Mn(2+) site. An MGS-like domain is found at 930 to 1057 (MHMPDHGKVL…ESQAFTTLHL (128 aa)). The allosteric domain stretch occupies residues 930–1057 (MHMPDHGKVL…ESQAFTTLHL (128 aa)).

Belongs to the CarB family. As to quaternary structure, composed of two chains; the small (or glutamine) chain promotes the hydrolysis of glutamine to ammonia, which is used by the large (or ammonia) chain to synthesize carbamoyl phosphate. Tetramer of heterodimers (alpha,beta)4. Mg(2+) serves as cofactor. Requires Mn(2+) as cofactor.

The catalysed reaction is hydrogencarbonate + L-glutamine + 2 ATP + H2O = carbamoyl phosphate + L-glutamate + 2 ADP + phosphate + 2 H(+). It catalyses the reaction hydrogencarbonate + NH4(+) + 2 ATP = carbamoyl phosphate + 2 ADP + phosphate + 2 H(+). It participates in amino-acid biosynthesis; L-arginine biosynthesis; carbamoyl phosphate from bicarbonate: step 1/1. It functions in the pathway pyrimidine metabolism; UMP biosynthesis via de novo pathway; (S)-dihydroorotate from bicarbonate: step 1/3. Large subunit of the glutamine-dependent carbamoyl phosphate synthetase (CPSase). CPSase catalyzes the formation of carbamoyl phosphate from the ammonia moiety of glutamine, carbonate, and phosphate donated by ATP, constituting the first step of 2 biosynthetic pathways, one leading to arginine and/or urea and the other to pyrimidine nucleotides. The large subunit (synthetase) binds the substrates ammonia (free or transferred from glutamine from the small subunit), hydrogencarbonate and ATP and carries out an ATP-coupled ligase reaction, activating hydrogencarbonate by forming carboxy phosphate which reacts with ammonia to form carbamoyl phosphate. The sequence is that of Carbamoyl phosphate synthase large chain from Pediococcus pentosaceus (strain ATCC 25745 / CCUG 21536 / LMG 10740 / 183-1w).